The chain runs to 181 residues: U1 small nuclear ribonucleoprotein C (181 aa).

A Matrin-type zinc finger spans residues 2–34 (PKCDYCDVYLTHDSMSVRKAHNSGRNHLRNVVD). 2 stretches are compositionally biased toward pro residues: residues 129–143 (PGMP…PGGL) and 150–174 (PIPP…PPPG). A disordered region spans residues 129-181 (PGMPAGMPFPPPGGLPPNFQFPIPPPGGFPGMPPPGQGFPGMPPPGGNHDERR).

This sequence belongs to the U1 small nuclear ribonucleoprotein C family. In terms of assembly, U1 snRNP is composed of the 7 core Sm proteins B/B', D1, D2, D3, E, F and G that assemble in a heptameric protein ring on the Sm site of the small nuclear RNA to form the core snRNP, and at least 3 U1 snRNP-specific proteins U1-70K, U1-A and U1-C. U1-C interacts with U1 snRNA and the 5' splice-site region of the pre-mRNA.

It is found in the nucleus. In terms of biological role, component of the spliceosomal U1 snRNP, which is essential for recognition of the pre-mRNA 5' splice-site and the subsequent assembly of the spliceosome. U1-C is directly involved in initial 5' splice-site recognition for both constitutive and regulated alternative splicing. The interaction with the 5' splice-site seems to precede base-pairing between the pre-mRNA and the U1 snRNA. Stimulates commitment or early (E) complex formation by stabilizing the base pairing of the 5' end of the U1 snRNA and the 5' splice-site region. This Sclerotinia sclerotiorum (strain ATCC 18683 / 1980 / Ss-1) (White mold) protein is U1 small nuclear ribonucleoprotein C.